Consider the following 702-residue polypeptide: Kinesin-like protein KIF3A (702 aa).

The Kinesin motor domain occupies 14 to 345 (NVKVVVRCRP…LRYANRAKNI (332 aa)). An ATP-binding site is contributed by 100-107 (GQTGTGKT). The stretch at 355–593 (PKDALLRQFQ…LSRELRLQML (239 aa)) forms a coiled coil. 2 disordered regions span residues 372 to 424 (KKLE…KMIE) and 667 to 702 (LMKL…SLLQ). Positions 376–400 (EGEEISGSDISGSEEDDDEEGEIGE) are enriched in acidic residues. The span at 410–424 (DQAGKKKVSPDKMIE) shows a compositional bias: basic and acidic residues. A globular region spans residues 600–702 (PRDYQEMIEN…PETVIDSLLQ (103 aa)). Residues 675 to 690 (TSKGKARPKTGRRKRS) are compositionally biased toward basic residues. Position 690 is a phosphoserine (Ser690).

Belongs to the TRAFAC class myosin-kinesin ATPase superfamily. Kinesin family. Kinesin II subfamily. Heterodimer of KIF3A and KIF3B. Interacts with CIMAP3. Interacts with CLN3. Interacts with DCTN1. Interacts with FLCN. Interacts with AP3B1.

It is found in the cytoplasm. Its subcellular location is the cytoskeleton. It localises to the cell projection. The protein resides in the cilium. The protein localises to the microtubule organizing center. It is found in the centrosome. Its subcellular location is the centriole. Microtubule-based anterograde translocator for membranous organelles. Plus end-directed microtubule sliding activity in vitro. Plays a role in primary cilia formation. Plays a role in centriole cohesion and subdistal appendage organization and function. Regulates the formation of the subdistal appendage via recruitment of DCTN1 to the centriole. Also required for ciliary basal feet formation and microtubule anchoring to mother centriole. This Pongo abelii (Sumatran orangutan) protein is Kinesin-like protein KIF3A (KIF3A).